Here is a 246-residue protein sequence, read N- to C-terminus: Bis(5'-nucleosyl)-tetraphosphatase PrpE [asymmetrical] (246 aa).

Belongs to the PrpE family. It depends on Ni(2+) as a cofactor.

The catalysed reaction is P(1),P(4)-bis(5'-guanosyl) tetraphosphate + H2O = GMP + GTP + 2 H(+). Its function is as follows. Asymmetrically hydrolyzes Ap4p to yield AMP and ATP. The sequence is that of Bis(5'-nucleosyl)-tetraphosphatase PrpE [asymmetrical] from Bacillus cereus (strain AH187).